Consider the following 225-residue polypeptide: MKLTYHGHSVVKIETNGKTIFIDPFITGNPLTDLKAEDVHVDVILLTHGHNDHVGDTVSLAKKNDALVIAPYELATYLSWKGVRIHPMHIGGSFTFDFGKVKLTQAFHGSSYVEENETIVYTGMPSGILFHAEGKTIYHAGDTALFSDMKLIGEMNDIDVAFLPIGDNFTMGPKDAAIAAKWLKAKMVVPIHYNTFPVIQQDPQQFVSMIEGIGRVLRIGESIEL.

Belongs to the UPF0173 family.

The polypeptide is UPF0173 metal-dependent hydrolase Aflv_0488 (Anoxybacillus flavithermus (strain DSM 21510 / WK1)).